The sequence spans 442 residues: UDP-N-acetylmuramoylalanine--D-glutamate ligase (442 aa).

The protein belongs to the MurCDEF family.

The protein resides in the cytoplasm. The enzyme catalyses UDP-N-acetyl-alpha-D-muramoyl-L-alanine + D-glutamate + ATP = UDP-N-acetyl-alpha-D-muramoyl-L-alanyl-D-glutamate + ADP + phosphate + H(+). Its pathway is cell wall biogenesis; peptidoglycan biosynthesis. In terms of biological role, cell wall formation. Catalyzes the addition of glutamate to the nucleotide precursor UDP-N-acetylmuramoyl-L-alanine (UMA). This is UDP-N-acetylmuramoylalanine--D-glutamate ligase from Buchnera aphidicola subsp. Baizongia pistaciae (strain Bp).